A 210-amino-acid chain; its full sequence is Probable GTP-binding protein EngB (210 aa).

An EngB-type G domain is found at 25 to 199 (TGIEVAFAGR…RQKLDTWFSE (175 aa)). GTP-binding positions include 33–40 (GRSNAGKS), 60–64 (GRTQL), 78–81 (DLPG), 145–148 (TKAD), and 178–180 (FSS). Positions 40 and 62 each coordinate Mg(2+).

It belongs to the TRAFAC class TrmE-Era-EngA-EngB-Septin-like GTPase superfamily. EngB GTPase family. Mg(2+) is required as a cofactor.

Functionally, necessary for normal cell division and for the maintenance of normal septation. The protein is Probable GTP-binding protein EngB of Escherichia coli O6:H1 (strain CFT073 / ATCC 700928 / UPEC).